Reading from the N-terminus, the 926-residue chain is Periplasmic nitrate reductase (926 aa).

The segment at residues 1 to 30 (MNRRDFIKSAAASAACASAGIAIPANLSAA) is a signal peptide (tat-type signal). One can recognise a 4Fe-4S Mo/W bis-MGD-type domain in the interval 37–93 (WRWDKAACRFCGTGCGIMVATKEGKIVAVKGDPEAPVNRGLNCIKGYFNAKIMYGED). C44, C47, C51, and C79 together coordinate [4Fe-4S] cluster. Residues K81, Q149, N174, C178, 211-218 (WGANMAEM), M419, Q423, N529, 554-555 (SD), K577, D604, and 816-825 (TGRVLEHWHS) each bind Mo-bis(molybdopterin guanine dinucleotide). W892 is a binding site for substrate. Positions 900 and 917 each coordinate Mo-bis(molybdopterin guanine dinucleotide).

It belongs to the prokaryotic molybdopterin-containing oxidoreductase family. NasA/NapA/NarB subfamily. Component of the periplasmic nitrate reductase NapAB complex composed of NapA and NapB. [4Fe-4S] cluster is required as a cofactor. Mo-bis(molybdopterin guanine dinucleotide) serves as cofactor. Post-translationally, predicted to be exported by the Tat system. The position of the signal peptide cleavage has not been experimentally proven.

Its subcellular location is the periplasm. The enzyme catalyses 2 Fe(II)-[cytochrome] + nitrate + 2 H(+) = 2 Fe(III)-[cytochrome] + nitrite + H2O. Catalytic subunit of the periplasmic nitrate reductase complex NapAB. Receives electrons from NapB and catalyzes the reduction of nitrate to nitrite. This Campylobacter curvus (strain 525.92) protein is Periplasmic nitrate reductase.